The primary structure comprises 433 residues: Probable M18 family aminopeptidase 2 (433 aa).

Positions 84, 161, and 409 each coordinate Zn(2+).

The protein belongs to the peptidase M18 family. Zn(2+) serves as cofactor.

This Clostridium acetobutylicum (strain ATCC 824 / DSM 792 / JCM 1419 / IAM 19013 / LMG 5710 / NBRC 13948 / NRRL B-527 / VKM B-1787 / 2291 / W) protein is Probable M18 family aminopeptidase 2 (apeB).